Here is a 342-residue protein sequence, read N- to C-terminus: Heat-inducible transcription repressor HrcA (342 aa).

This sequence belongs to the HrcA family.

In terms of biological role, negative regulator of class I heat shock genes (grpE-dnaK-dnaJ and groELS operons). Prevents heat-shock induction of these operons. This Geobacter sulfurreducens (strain ATCC 51573 / DSM 12127 / PCA) protein is Heat-inducible transcription repressor HrcA.